The primary structure comprises 195 residues: Protein GrpE (195 aa).

Belongs to the GrpE family. In terms of assembly, homodimer.

Its subcellular location is the cytoplasm. Its function is as follows. Participates actively in the response to hyperosmotic and heat shock by preventing the aggregation of stress-denatured proteins, in association with DnaK and GrpE. It is the nucleotide exchange factor for DnaK and may function as a thermosensor. Unfolded proteins bind initially to DnaJ; upon interaction with the DnaJ-bound protein, DnaK hydrolyzes its bound ATP, resulting in the formation of a stable complex. GrpE releases ADP from DnaK; ATP binding to DnaK triggers the release of the substrate protein, thus completing the reaction cycle. Several rounds of ATP-dependent interactions between DnaJ, DnaK and GrpE are required for fully efficient folding. The sequence is that of Protein GrpE from Francisella tularensis subsp. mediasiatica (strain FSC147).